The chain runs to 813 residues: Leucine--tRNA ligase (813 aa).

Residues 41 to 51 (PYPSGTLHMGH) carry the 'HIGH' region motif. Positions 575 to 579 (KMSKS) match the 'KMSKS' region motif. Lysine 578 serves as a coordination point for ATP.

The protein belongs to the class-I aminoacyl-tRNA synthetase family.

The protein resides in the cytoplasm. It catalyses the reaction tRNA(Leu) + L-leucine + ATP = L-leucyl-tRNA(Leu) + AMP + diphosphate. The chain is Leucine--tRNA ligase from Francisella philomiragia subsp. philomiragia (strain ATCC 25017 / CCUG 19701 / FSC 153 / O#319-036).